Reading from the N-terminus, the 352-residue chain is Holliday junction branch migration complex subunit RuvB (352 aa).

The segment at 1–42 is disordered; it reads MAIVSSSAGRADSQPPAAKSRVVDASPLPEEASPAREDGLRP. Positions 13 to 201 are large ATPase domain (RuvB-L); it reads SQPPAAKSRV…FGLIQRLEFY (189 aa). Residues 33 to 42 are compositionally biased toward basic and acidic residues; the sequence is SPAREDGLRP. ATP-binding residues include Leu-40, Arg-41, Gly-82, Lys-85, Thr-86, Thr-87, Arg-191, Tyr-201, and Arg-238. Thr-86 provides a ligand contact to Mg(2+). A small ATPAse domain (RuvB-S) region spans residues 202-273; it reads GLEDLQAIVE…LVDEALTLHR (72 aa). A head domain (RuvB-H) region spans residues 276-352; the sequence is ARGLDASDRR…RRHLGWPELP (77 aa). Arg-331 and Arg-336 together coordinate DNA.

This sequence belongs to the RuvB family. In terms of assembly, homohexamer. Forms an RuvA(8)-RuvB(12)-Holliday junction (HJ) complex. HJ DNA is sandwiched between 2 RuvA tetramers; dsDNA enters through RuvA and exits via RuvB. An RuvB hexamer assembles on each DNA strand where it exits the tetramer. Each RuvB hexamer is contacted by two RuvA subunits (via domain III) on 2 adjacent RuvB subunits; this complex drives branch migration. In the full resolvosome a probable DNA-RuvA(4)-RuvB(12)-RuvC(2) complex forms which resolves the HJ.

Its subcellular location is the cytoplasm. The catalysed reaction is ATP + H2O = ADP + phosphate + H(+). Functionally, the RuvA-RuvB-RuvC complex processes Holliday junction (HJ) DNA during genetic recombination and DNA repair, while the RuvA-RuvB complex plays an important role in the rescue of blocked DNA replication forks via replication fork reversal (RFR). RuvA specifically binds to HJ cruciform DNA, conferring on it an open structure. The RuvB hexamer acts as an ATP-dependent pump, pulling dsDNA into and through the RuvAB complex. RuvB forms 2 homohexamers on either side of HJ DNA bound by 1 or 2 RuvA tetramers; 4 subunits per hexamer contact DNA at a time. Coordinated motions by a converter formed by DNA-disengaged RuvB subunits stimulates ATP hydrolysis and nucleotide exchange. Immobilization of the converter enables RuvB to convert the ATP-contained energy into a lever motion, pulling 2 nucleotides of DNA out of the RuvA tetramer per ATP hydrolyzed, thus driving DNA branch migration. The RuvB motors rotate together with the DNA substrate, which together with the progressing nucleotide cycle form the mechanistic basis for DNA recombination by continuous HJ branch migration. Branch migration allows RuvC to scan DNA until it finds its consensus sequence, where it cleaves and resolves cruciform DNA. The sequence is that of Holliday junction branch migration complex subunit RuvB from Prochlorococcus marinus (strain MIT 9313).